The sequence spans 32 residues: Dermatoxin-J2 (32 aa).

Q32 is modified (glutamine amide).

Expressed by the skin glands.

It localises to the secreted. In terms of biological role, antimicrobial peptide. The polypeptide is Dermatoxin-J2 (Phasmahyla jandaia (Jandaia leaf frog)).